A 193-amino-acid polypeptide reads, in one-letter code: dTTP/UTP pyrophosphatase (193 aa).

The active-site Proton acceptor is aspartate 77.

This sequence belongs to the Maf family. YhdE subfamily. A divalent metal cation serves as cofactor.

The protein localises to the cytoplasm. The enzyme catalyses dTTP + H2O = dTMP + diphosphate + H(+). It catalyses the reaction UTP + H2O = UMP + diphosphate + H(+). Functionally, nucleoside triphosphate pyrophosphatase that hydrolyzes dTTP and UTP. May have a dual role in cell division arrest and in preventing the incorporation of modified nucleotides into cellular nucleic acids. The chain is dTTP/UTP pyrophosphatase from Phocaeicola vulgatus (strain ATCC 8482 / DSM 1447 / JCM 5826 / CCUG 4940 / NBRC 14291 / NCTC 11154) (Bacteroides vulgatus).